A 1381-amino-acid polypeptide reads, in one-letter code: Hepatocyte growth factor receptor (1381 aa).

A signal peptide spans 1 to 24; it reads MKAPAVLAPGILVLLFTLVQKSKG. Over 25–932 the chain is Extracellular; that stretch reads ECKEALVKST…VIVQPDQNFT (908 aa). In terms of domain architecture, Sema spans 27–515; it reads KEALVKSTMN…TGKKITKIPL (489 aa). The N-linked (GlcNAc...) asparagine glycan is linked to asparagine 45. Disulfide bonds link cysteine 95–cysteine 101, cysteine 98–cysteine 160, cysteine 133–cysteine 141, and cysteine 173–cysteine 176. N-linked (GlcNAc...) asparagine glycosylation is present at asparagine 106. N-linked (GlcNAc...) asparagine glycans are attached at residues asparagine 203 and asparagine 359. 2 cysteine pairs are disulfide-bonded: cysteine 299–cysteine 364 and cysteine 386–cysteine 398. 2 N-linked (GlcNAc...) asparagine glycosylation sites follow: asparagine 400 and asparagine 406. Intrachain disulfides connect cysteine 520-cysteine 538, cysteine 526-cysteine 561, cysteine 529-cysteine 545, and cysteine 541-cysteine 551. IPT/TIG domains lie at 563–655, 657–739, and 742–836; these read PTVY…FSYV, PVIT…FTYR, and PIVY…LIYV. The O-linked (Man) threonine glycan is linked to threonine 582. Residues asparagine 607 and asparagine 635 are each glycosylated (N-linked (GlcNAc...) asparagine). Residues threonine 676 and threonine 761 are each glycosylated (O-linked (Man) threonine). 3 N-linked (GlcNAc...) asparagine glycosylation sites follow: asparagine 785, asparagine 879, and asparagine 930. The helical transmembrane segment at 933-955 threads the bilayer; sequence GLIVGVVSISIILLLLLGLFLWL. The Cytoplasmic portion of the chain corresponds to 956–1381; it reads KKRKQIKDLG…QDNVDGEGDT (426 aa). Serine 966 is modified (phosphoserine). At threonine 977 the chain carries Phosphothreonine. 2 positions are modified to phosphoserine: serine 990 and serine 997. Residue tyrosine 1003 is modified to Phosphotyrosine. In terms of domain architecture, Protein kinase spans 1078–1345; sequence VHFNEVIGRG…RISAIFSTFI (268 aa). ATP contacts are provided by residues 1084 to 1092 and lysine 1110; that span reads IGRGHFGCV. Catalysis depends on aspartate 1204, which acts as the Proton acceptor. The interaction with RANBP9 stretch occupies residues 1212–1381; it reads LDEKFTVKVA…QDNVDGEGDT (170 aa). Tyrosine 1230 is modified (phosphotyrosine). Residues tyrosine 1234 and tyrosine 1235 each carry the phosphotyrosine; by autocatalysis modification. Threonine 1289 is subject to Phosphothreonine. Residues 1320-1359 form an interaction with MUC20 region; it reads WHPRAELRPSFSELVSRISAIFSTFIGEHYVHVNATYVNV. Phosphotyrosine; by autocatalysis occurs at positions 1349 and 1356. At tyrosine 1365 the chain carries Phosphotyrosine.

This sequence belongs to the protein kinase superfamily. Tyr protein kinase family. Heterodimer made of an alpha chain (50 kDa) and a beta chain (145 kDa) which are disulfide linked. Binds PLXNB1. Interacts when phosphorylated with downstream effectors including STAT3, PIK3R1, SRC, PCLG1, GRB2 and GAB1. Interacts with SPSB1, SPSB2 and SPSB4. Interacts with INPP5D/SHIP1. When phosphorylated at Tyr-1356, interacts with INPPL1/SHIP2. Interacts with RANBP9 and RANBP10, as well as SPSB1, SPSB2, SPSB3 and SPSB4. SPSB1 binding occurs in the presence and in the absence of HGF, however HGF treatment has a positive effect on this interaction. Interacts with MUC20; prevents interaction with GRB2 and suppresses hepatocyte growth factor-induced cell proliferation. Interacts with GRB10. Interacts with PTPN1 and PTPN2. Interacts with HSP90AA1 and HSP90AB1; the interaction suppresses MET kinase activity. Interacts with tensin TNS3. Interacts (when phosphorylated) with tensin TNS4 (via SH2 domain); the interaction increases MET protein stability by inhibiting MET endocytosis and subsequent lysosomal degradation. Autophosphorylated in response to ligand binding on Tyr-1234 and Tyr-1235 in the kinase domain leading to further phosphorylation of Tyr-1349 and Tyr-1356 in the C-terminal multifunctional docking site. Dephosphorylated by PTPRJ at Tyr-1349 and Tyr-1365. Dephosphorylated by PTPN1 and PTPN2. In terms of processing, ubiquitinated. Ubiquitination by CBL regulates the receptor stability and activity through proteasomal degradation. Post-translationally, O-mannosylation of IPT/TIG domains by TMEM260 is required for protein maturation. O-mannosylated residues are composed of single mannose glycans that are not elongated or modified.

It is found in the membrane. The enzyme catalyses L-tyrosyl-[protein] + ATP = O-phospho-L-tyrosyl-[protein] + ADP + H(+). Its activity is regulated as follows. In its inactive state, the C-terminal tail interacts with the catalytic domain and inhibits the kinase activity. Upon ligand binding, the C-terminal tail is displaced and becomes phosphorylated, thus increasing the kinase activity. Functionally, receptor tyrosine kinase that transduces signals from the extracellular matrix into the cytoplasm by binding to hepatocyte growth factor/HGF ligand. Regulates many physiological processes including proliferation, scattering, morphogenesis and survival. Ligand binding at the cell surface induces autophosphorylation of MET on its intracellular domain that provides docking sites for downstream signaling molecules. Following activation by ligand, interacts with the PI3-kinase subunit PIK3R1, PLCG1, SRC, GRB2, STAT3 or the adapter GAB1. Recruitment of these downstream effectors by MET leads to the activation of several signaling cascades including the RAS-ERK, PI3 kinase-AKT, or PLCgamma-PKC. The RAS-ERK activation is associated with the morphogenetic effects while PI3K/AKT coordinates prosurvival effects. During embryonic development, MET signaling plays a role in gastrulation, development and migration of muscles and neuronal precursors, angiogenesis and kidney formation. In adults, participates in wound healing as well as organ regeneration and tissue remodeling. Also promotes differentiation and proliferation of hematopoietic cells. This is Hepatocyte growth factor receptor (MET) from Sus scrofa (Pig).